The primary structure comprises 367 residues: NADH-quinone oxidoreductase subunit H (367 aa).

The next 8 membrane-spanning stretches (helical) occupy residues 18–38, 87–107, 132–152, 180–200, 204–224, 257–277, 291–311, and 328–348; these read VLLF…VAYL, LCFL…WAVI, IGVL…IIAG, LTIV…IVIA, MPYW…ISAL, FFLG…IFFF, IIPG…CFIW, and GWKV…GILV.

It belongs to the complex I subunit 1 family. NDH-1 is composed of 14 different subunits. Subunits NuoA, H, J, K, L, M, N constitute the membrane sector of the complex.

The protein resides in the cell inner membrane. The catalysed reaction is a quinone + NADH + 5 H(+)(in) = a quinol + NAD(+) + 4 H(+)(out). Functionally, NDH-1 shuttles electrons from NADH, via FMN and iron-sulfur (Fe-S) centers, to quinones in the respiratory chain. The immediate electron acceptor for the enzyme in this species is believed to be ubiquinone. Couples the redox reaction to proton translocation (for every two electrons transferred, four hydrogen ions are translocated across the cytoplasmic membrane), and thus conserves the redox energy in a proton gradient. This subunit may bind ubiquinone. This is NADH-quinone oxidoreductase subunit H from Ehrlichia ruminantium (strain Gardel).